The sequence spans 206 residues: Thiamine-phosphate synthase (206 aa).

4-amino-2-methyl-5-(diphosphooxymethyl)pyrimidine contacts are provided by residues 35–39 (QLRHK) and N67. Residues D68 and D87 each coordinate Mg(2+). S106 is a binding site for 4-amino-2-methyl-5-(diphosphooxymethyl)pyrimidine. 132–134 (TGS) provides a ligand contact to 2-[(2R,5Z)-2-carboxy-4-methylthiazol-5(2H)-ylidene]ethyl phosphate. K135 provides a ligand contact to 4-amino-2-methyl-5-(diphosphooxymethyl)pyrimidine. G163 provides a ligand contact to 2-[(2R,5Z)-2-carboxy-4-methylthiazol-5(2H)-ylidene]ethyl phosphate.

The protein belongs to the thiamine-phosphate synthase family. It depends on Mg(2+) as a cofactor.

The catalysed reaction is 2-[(2R,5Z)-2-carboxy-4-methylthiazol-5(2H)-ylidene]ethyl phosphate + 4-amino-2-methyl-5-(diphosphooxymethyl)pyrimidine + 2 H(+) = thiamine phosphate + CO2 + diphosphate. It carries out the reaction 2-(2-carboxy-4-methylthiazol-5-yl)ethyl phosphate + 4-amino-2-methyl-5-(diphosphooxymethyl)pyrimidine + 2 H(+) = thiamine phosphate + CO2 + diphosphate. The enzyme catalyses 4-methyl-5-(2-phosphooxyethyl)-thiazole + 4-amino-2-methyl-5-(diphosphooxymethyl)pyrimidine + H(+) = thiamine phosphate + diphosphate. It functions in the pathway cofactor biosynthesis; thiamine diphosphate biosynthesis; thiamine phosphate from 4-amino-2-methyl-5-diphosphomethylpyrimidine and 4-methyl-5-(2-phosphoethyl)-thiazole: step 1/1. Condenses 4-methyl-5-(beta-hydroxyethyl)thiazole monophosphate (THZ-P) and 2-methyl-4-amino-5-hydroxymethyl pyrimidine pyrophosphate (HMP-PP) to form thiamine monophosphate (TMP). The polypeptide is Thiamine-phosphate synthase (Chlorobium phaeobacteroides (strain DSM 266 / SMG 266 / 2430)).